The sequence spans 288 residues: GDSL esterase/lipase At3g43550 (288 aa).

The signal sequence occupies residues Met1–Ala19. Asn25 carries an N-linked (GlcNAc...) asparagine glycan. Catalysis depends on Ser37, which acts as the Nucleophile.

This sequence belongs to the 'GDSL' lipolytic enzyme family.

It is found in the secreted. This chain is GDSL esterase/lipase At3g43550, found in Arabidopsis thaliana (Mouse-ear cress).